Here is a 234-residue protein sequence, read N- to C-terminus: uncharacterized protein (234 aa).

The segment at 212–234 is disordered; that stretch reads GKHLKLDSNTTENKTTKQNETGG. Positions 220–234 are enriched in low complexity; that stretch reads NTTENKTTKQNETGG.

This is an uncharacterized protein from Methanothermobacter thermautotrophicus (Methanobacterium thermoformicicum).